The primary structure comprises 483 residues: Regulatory protein ViaA (483 aa).

This sequence belongs to the ViaA family. Homodimer. Interacts with RavA.

It is found in the cytoplasm. Component of the RavA-ViaA chaperone complex, which may act on the membrane to optimize the function of some of the respiratory chains. ViaA stimulates the ATPase activity of RavA. This is Regulatory protein ViaA from Shigella dysenteriae serotype 1 (strain Sd197).